We begin with the raw amino-acid sequence, 223 residues long: Putative NAD(P)H nitroreductase SAB2397c (223 aa).

This sequence belongs to the nitroreductase family. It depends on FMN as a cofactor.

This is Putative NAD(P)H nitroreductase SAB2397c from Staphylococcus aureus (strain bovine RF122 / ET3-1).